The following is a 141-amino-acid chain: Hemoglobin subunit alpha-A (141 aa).

The 141-residue stretch at 1–141 folds into the Globin domain; that stretch reads VLSGPDKTNV…VGAVLTAKYR (141 aa). Residue histidine 58 coordinates O2. Position 87 (histidine 87) interacts with heme b.

It belongs to the globin family. In terms of assembly, heterotetramer of two alpha chains and two beta chains. In terms of tissue distribution, red blood cells.

Functionally, involved in oxygen transport from the lung to the various peripheral tissues. The polypeptide is Hemoglobin subunit alpha-A (HBAA) (Rhea americana (Greater rhea)).